The following is a 444-amino-acid chain: MNHSRSHALFVQAQTRIPGGVNSPVRAFRSVGGEPFFVARADGPYLFDVDGHRYIDYVGSWGPMIVGHNHPGVREAVQVAISNGLSYGAPCAAEVTMAETIARLVPSCQMVRMVNSGTEATLSAIRLARGATGRNYIVKFEGCYHGHGDSFLVKGGSGMLTLGLPSSPGVPAELSKLTITLTYNDFDAATALFEEMGHHIAAVIVEPVIGNANCIPPRPGYLQHLRTLCTQYGVLLIFDEVMTGFRVALGGAQALYGVTPDLTTFGKIIGGGMPVGAYGGRRDLMQHIAPAGPIYQAGTLSGNPVAMAAGLAMLELIQAPDFYTHLSNAAAALCTGLQQAASQAGIAMTTQQIGGMFGLFFTDQQVETYAQATACNTDRFNRFFHAMLQRGVFFAPSAYEAGFISSAHSPNIIEATLEAARTAFQTIANEAAILSKSETPIKMR.

Lys267 carries the N6-(pyridoxal phosphate)lysine modification.

The protein belongs to the class-III pyridoxal-phosphate-dependent aminotransferase family. HemL subfamily. Homodimer. Pyridoxal 5'-phosphate serves as cofactor.

The protein resides in the cytoplasm. The enzyme catalyses (S)-4-amino-5-oxopentanoate = 5-aminolevulinate. The protein operates within porphyrin-containing compound metabolism; protoporphyrin-IX biosynthesis; 5-aminolevulinate from L-glutamyl-tRNA(Glu): step 2/2. This chain is Glutamate-1-semialdehyde 2,1-aminomutase, found in Xylella fastidiosa (strain M12).